A 513-amino-acid chain; its full sequence is 2,3-bisphosphoglycerate-independent phosphoglycerate mutase (513 aa).

2 residues coordinate Mn(2+): D13 and S63. S63 functions as the Phosphoserine intermediate in the catalytic mechanism. Substrate-binding positions include H124, 154–155, R186, R192, 262–265, and K335; these read RD and RADR. 5 residues coordinate Mn(2+): D402, H406, D443, H444, and H462.

Belongs to the BPG-independent phosphoglycerate mutase family. As to quaternary structure, monomer. Mn(2+) is required as a cofactor.

The enzyme catalyses (2R)-2-phosphoglycerate = (2R)-3-phosphoglycerate. Its pathway is carbohydrate degradation; glycolysis; pyruvate from D-glyceraldehyde 3-phosphate: step 3/5. Its function is as follows. Catalyzes the interconversion of 2-phosphoglycerate and 3-phosphoglycerate. This chain is 2,3-bisphosphoglycerate-independent phosphoglycerate mutase, found in Shewanella frigidimarina (strain NCIMB 400).